An 887-amino-acid polypeptide reads, in one-letter code: Bifunctional uridylyltransferase/uridylyl-removing enzyme (887 aa).

Residues 1–329 (MKGLNAKPFS…FPDEEAVTTI (329 aa)) form a uridylyltransferase region. Positions 330–686 (INERFQKRGD…TRAAETGAGV (357 aa)) are uridylyl-removing. An HD domain is found at 448 to 570 (VDEHILMVVR…MRDERHLIAL (123 aa)). 2 ACT domains span residues 687–772 (EVLV…GRLS) and 796–871 (VLSI…PETP). The tract at residues 864–887 (TSPQPETPGKAPGKPSAGDRIIPR) is disordered.

The protein belongs to the GlnD family. Mg(2+) serves as cofactor.

It catalyses the reaction [protein-PII]-L-tyrosine + UTP = [protein-PII]-uridylyl-L-tyrosine + diphosphate. It carries out the reaction [protein-PII]-uridylyl-L-tyrosine + H2O = [protein-PII]-L-tyrosine + UMP + H(+). Its activity is regulated as follows. Uridylyltransferase (UTase) activity is inhibited by glutamine, while glutamine activates uridylyl-removing (UR) activity. Its function is as follows. Modifies, by uridylylation and deuridylylation, the PII regulatory proteins (GlnB and homologs), in response to the nitrogen status of the cell that GlnD senses through the glutamine level. Under low glutamine levels, catalyzes the conversion of the PII proteins and UTP to PII-UMP and PPi, while under higher glutamine levels, GlnD hydrolyzes PII-UMP to PII and UMP (deuridylylation). Thus, controls uridylylation state and activity of the PII proteins, and plays an important role in the regulation of nitrogen assimilation and metabolism. The sequence is that of Bifunctional uridylyltransferase/uridylyl-removing enzyme from Nitrosospira multiformis (strain ATCC 25196 / NCIMB 11849 / C 71).